We begin with the raw amino-acid sequence, 417 residues long: Glutamate-1-semialdehyde 2,1-aminomutase (417 aa).

The residue at position 267 (lysine 267) is an N6-(pyridoxal phosphate)lysine.

The protein belongs to the class-III pyridoxal-phosphate-dependent aminotransferase family. HemL subfamily. Homodimer. Pyridoxal 5'-phosphate is required as a cofactor.

It is found in the cytoplasm. The enzyme catalyses (S)-4-amino-5-oxopentanoate = 5-aminolevulinate. It participates in porphyrin-containing compound metabolism; protoporphyrin-IX biosynthesis; 5-aminolevulinate from L-glutamyl-tRNA(Glu): step 2/2. This Solibacter usitatus (strain Ellin6076) protein is Glutamate-1-semialdehyde 2,1-aminomutase.